Reading from the N-terminus, the 45-residue chain is Cytochrome b559 subunit beta (45 aa).

Residues 20-36 (WLALHTLGIPTVFFLGA) traverse the membrane as a helical segment. A heme-binding site is contributed by histidine 24.

Belongs to the PsbE/PsbF family. In terms of assembly, heterodimer of an alpha subunit and a beta subunit. PSII is composed of 1 copy each of membrane proteins PsbA, PsbB, PsbC, PsbD, PsbE, PsbF, PsbH, PsbI, PsbJ, PsbK, PsbL, PsbM, PsbT, PsbX, PsbY, PsbZ, Psb30/Ycf12, peripheral proteins PsbO, CyanoQ (PsbQ), PsbU, PsbV and a large number of cofactors. It forms dimeric complexes. It depends on heme b as a cofactor.

It is found in the cellular thylakoid membrane. This b-type cytochrome is tightly associated with the reaction center of photosystem II (PSII). PSII is a light-driven water:plastoquinone oxidoreductase that uses light energy to abstract electrons from H(2)O, generating O(2) and a proton gradient subsequently used for ATP formation. It consists of a core antenna complex that captures photons, and an electron transfer chain that converts photonic excitation into a charge separation. The protein is Cytochrome b559 subunit beta of Synechococcus sp. (strain CC9902).